Here is a 467-residue protein sequence, read N- to C-terminus: Protein arginine methyltransferase NDUFAF7 homolog, mitochondrial (467 aa).

The protein belongs to the NDUFAF7 family.

It localises to the mitochondrion. The catalysed reaction is L-arginyl-[protein] + 2 S-adenosyl-L-methionine = N(omega),N(omega)'-dimethyl-L-arginyl-[protein] + 2 S-adenosyl-L-homocysteine + 2 H(+). In terms of biological role, arginine methyltransferase involved in the assembly or stability of mitochondrial NADH:ubiquinone oxidoreductase complex (complex I). The sequence is that of Protein arginine methyltransferase NDUFAF7 homolog, mitochondrial from Schizosaccharomyces pombe (strain 972 / ATCC 24843) (Fission yeast).